A 696-amino-acid chain; its full sequence is Polyribonucleotide nucleotidyltransferase (696 aa).

Aspartate 489 and aspartate 495 together coordinate Mg(2+). The KH domain maps to 556 to 615 (PQYVTMKINPEKIRDVIGKGGVVIREITEATNCAIDISDDGTIKIAAHTTEEGEAAKRRI). In terms of domain architecture, S1 motif spans 625–693 (GKVYEGTVVK…RQGRVRLSMK (69 aa)).

It belongs to the polyribonucleotide nucleotidyltransferase family. In terms of assembly, component of the RNA degradosome, which is a multiprotein complex involved in RNA processing and mRNA degradation. It depends on Mg(2+) as a cofactor.

The protein resides in the cytoplasm. The enzyme catalyses RNA(n+1) + phosphate = RNA(n) + a ribonucleoside 5'-diphosphate. Functionally, involved in mRNA degradation. Catalyzes the phosphorolysis of single-stranded polyribonucleotides processively in the 3'- to 5'-direction. This is Polyribonucleotide nucleotidyltransferase from Coxiella burnetii (strain RSA 331 / Henzerling II).